Here is a 216-residue protein sequence, read N- to C-terminus: Small ribosomal subunit protein uS3 (216 aa).

Residues 38 to 106 (IRGYLKKKLY…EIIINILEVR (69 aa)) enclose the KH type-2 domain.

Belongs to the universal ribosomal protein uS3 family. In terms of assembly, part of the 30S ribosomal subunit. Forms a tight complex with proteins S10 and S14.

Its function is as follows. Binds the lower part of the 30S subunit head. Binds mRNA in the 70S ribosome, positioning it for translation. The polypeptide is Small ribosomal subunit protein uS3 (Syntrophus aciditrophicus (strain SB)).